The following is a 451-amino-acid chain: Target of rapamycin complex 1 subunit tco89 (451 aa).

Residues 1–35 (MERPSLSRRTSSSTVSTDGEGVYSRSTKERKRNFI) form a disordered region. Over residues 7–17 (SRRTSSSTVST) the composition is skewed to low complexity. Ser-70 bears the Phosphoserine mark. 3 disordered regions span residues 122 to 164 (WDDA…PVTR), 176 to 264 (INSN…GNSL), and 362 to 437 (NQNF…DTDY). Over residues 129–162 (NDSTAGNLDSDSALPTPSVTTNEAADSSRASSPV) the composition is skewed to polar residues. Residues 203–215 (DDSAADASTTKSS) show a composition bias toward low complexity. Composition is skewed to polar residues over residues 228-242 (HSNN…NQPK), 362-376 (NQNF…TSAA), and 407-417 (QSASLNASMSA). Residues 419-430 (SHARQRSIHVPK) show a composition bias toward basic residues.

Belongs to the TORC subunit TCO89 family. As to quaternary structure, the target of rapamycin complex 1 (TORC1) is composed of at least mip1, pop3/wat1, tco89, toc1 and tor2. In terms of processing, either Thr-10, Ser-11, Ser-12, Ser-13 or Thr-14 and Ser-214 or Ser-215 and Ser-247 or Ser-249 are phosphorylated as well.

The protein localises to the cytoplasm. Functionally, component of TORC1, which regulates multiple cellular processes to control cell growth in response to environmental signals. Tor2 is essential for growth. Nutrient limitation and environmental stress signals cause inactivation of TORC1. Active TORC1 positively controls cell growth and ribosome biogenesis by regulating ribosomal protein gene expression. TORC1 negatively controls G1 cell-cycle arrest, sexual development and amino acid uptake. Represses mating, meiosis and sporulation efficiency by interfering with the functions of the transcription factor ste11 and the meiosis-promoting RNA-binding protein mei2. The chain is Target of rapamycin complex 1 subunit tco89 from Schizosaccharomyces pombe (strain 972 / ATCC 24843) (Fission yeast).